Reading from the N-terminus, the 686-residue chain is MILSGKKRMLLDNYKNARAPGGDDERDWVFDRPAIVTRRDKSDRMAHPYIGIIPRTNIYSAVLDSYCKSLNPVYKERIPPVLGTGRDVPVTPANVTGELARAARALCGDLASGDPEALVEFASAVQTQRTSRGCPVFRELSEFLVNLASFLNRCYSVKSDTIEPFQKQLILHTFYFLISIKAPHAANTLFEVFKEYFGLFDMGREALQTFKQKSTVYLIPRRHGKTWIVVAIISMLLTSVENIHVGYVAHQKHVANSVFAEIINTIYRWFPAKNVYIKKENGTIMYTNENRRPSTLMCATCFNKNSIRGQTFNLLYVDEANFIKKDSLPSILGFMLQKDAKIIFISSVNSSDQTTSFLYNLKNAKEKMLNVVNYVCPQHREDFSLQESVVSCPCYRLHIPTYIAIDENIKDTTNLFMEGAFTTELMGDGAAATTQTNMHKVVGEPALVQFDLCRVDTGSPEAQRGLNPTLFLYVDPAYTNNTEASGTGMGAVVSMKNSDRCVVVGVEHFFLKELTGASSLQIASCAAALIRSLATLHPFVREAHVAIEGNSSQDSAVAIATLLHERSPLPVKFLHHADKATGVQWPMYILGAEKARAFETFIYALNSNTLSCGQAIVSNTIKLSFDPVAYLIEQIRAIKCYPLKDGTVSYCAKHKGGSDDTLVAVVMAHYFATSDRHVFKNHMKQI.

A Walker A motif motif is present at residues 219–226 (IPRRHGKT). The short motif at 314–319 (LLYVDE) is the Walker B motif element. The active-site For ATPase activity is the Glu319. Residues Asp475, Glu548, and Asp660 each act as for nuclease activity in the active site.

This sequence belongs to the herpesviridae TRM3 protein family. As to quaternary structure, interacts with the terminase subunits TRM1 and TRM2. Interacts with portal protein.

It localises to the host nucleus. Functionally, component of the molecular motor that translocates viral genomic DNA in empty capsid during DNA packaging. Forms a tripartite terminase complex together with TRM1 and TRM2 in the host cytoplasm. Once the complex reaches the host nucleus, it interacts with the capsid portal vertex. This portal forms a ring in which genomic DNA is translocated into the capsid. TRM3 carries an RNase H-like nuclease activity that plays an important role for the cleavage of concatemeric viral DNA into unit length genomes. The chain is Tripartite terminase subunit 3 from Equine herpesvirus 2 (strain 86/87) (EHV-2).